Reading from the N-terminus, the 272-residue chain is NADH-cytochrome b5 reductase 3 (272 aa).

The 113-residue stretch at 11–123 (DIKYPLRLID…RGPNGLLVYQ (113 aa)) folds into the FAD-binding FR-type domain. N6-acetyllysine is present on K13. Y14 carries the post-translational modification Phosphotyrosine. K21 is subject to N6-acetyllysine. Residues R63, P64, Y65, V80, K82, and Y84 each contribute to the FAD site. Residue K91 is modified to N6-acetyllysine. FAD contacts are provided by K97, M98, S99, and T156.

This sequence belongs to the flavoprotein pyridine nucleotide cytochrome reductase family. Component of a complex composed of cytochrome b5, NADH-cytochrome b5 reductase (CYB5R3) and MTARC2. Interacts with MTLN; the interaction is required to maintain cellular lipid composition and leads to stimulation of mitochondrial respiratory complex I activity. FAD serves as cofactor.

The protein localises to the endoplasmic reticulum membrane. The protein resides in the mitochondrion outer membrane. The enzyme catalyses 2 Fe(III)-[cytochrome b5] + NADH = 2 Fe(II)-[cytochrome b5] + NAD(+) + H(+). Its function is as follows. Catalyzes the reduction of two molecules of cytochrome b5 using NADH as the electron donor. This chain is NADH-cytochrome b5 reductase 3 (CYB5R3), found in Sus scrofa (Pig).